We begin with the raw amino-acid sequence, 377 residues long: Actin depolymerising venom protein gelsolin 1 (377 aa).

Positions 1–26 are cleaved as a signal peptide; sequence MFRQMKLGSLATKLLLACFLVTCTSG. Gelsolin-like repeat units lie at residues 50–133, 174–243, and 298–368; these read FVPV…SEQF, IRVR…SSTS, and EKPL…PTAF.

As to expression, expressed by the venom gland (posterior main gland) (at protein level).

The protein resides in the secreted. The chain is Actin depolymerising venom protein gelsolin 1 from Platymeris rhadamanthus (Red spot assassin bug).